We begin with the raw amino-acid sequence, 167 residues long: NADH-quinone oxidoreductase subunit B 2 (167 aa).

Positions 38, 39, 103, and 132 each coordinate [4Fe-4S] cluster.

It belongs to the complex I 20 kDa subunit family. As to quaternary structure, NDH-1 is composed of 14 different subunits. Subunits NuoB, C, D, E, F, and G constitute the peripheral sector of the complex. [4Fe-4S] cluster is required as a cofactor.

Its subcellular location is the cell inner membrane. It carries out the reaction a quinone + NADH + 5 H(+)(in) = a quinol + NAD(+) + 4 H(+)(out). In terms of biological role, NDH-1 shuttles electrons from NADH, via FMN and iron-sulfur (Fe-S) centers, to quinones in the respiratory chain. The immediate electron acceptor for the enzyme in this species is believed to be ubiquinone. Couples the redox reaction to proton translocation (for every two electrons transferred, four hydrogen ions are translocated across the cytoplasmic membrane), and thus conserves the redox energy in a proton gradient. This chain is NADH-quinone oxidoreductase subunit B 2, found in Rhizobium meliloti (strain 1021) (Ensifer meliloti).